A 140-amino-acid chain; its full sequence is Putative pre-16S rRNA nuclease (140 aa).

This sequence belongs to the YqgF nuclease family.

It is found in the cytoplasm. In terms of biological role, could be a nuclease involved in processing of the 5'-end of pre-16S rRNA. The polypeptide is Putative pre-16S rRNA nuclease (Enterococcus faecalis (strain ATCC 700802 / V583)).